Consider the following 265-residue polypeptide: MIPMHVAVIMDGNGRWARKQLQERTFGHEQGVSVLESIVDECINCGIRFLTVYAFSTENWSRPPTEVSFLFELLSAAIQRVRTTYRERNVKVQFCGERTTQIPETVIAAMNCIEQDTAACTGLILSVCFNYGGHTEIAQACRSVLADCLEGDAVENIKTRLQMPIEQFIQQIDTHLYANLPPVDLLIRTGCEKRLSNFLPWHLAYAEIIFSDLLWPEFSVRAFKDCLDEFASRTRRFGGVQLSPMTGVYSDTHPHSSTNALSNHD.

The short motif at 236–238 is the RXG motif; crucial for prenyltransferase activity element; sequence RFG.

The protein belongs to the UPP synthase family. Mg(2+) serves as cofactor.

It carries out the reaction 8 isopentenyl diphosphate + (2E,6E)-farnesyl diphosphate = di-trans,octa-cis-undecaprenyl diphosphate + 8 diphosphate. It participates in protein modification; protein glycosylation. Its pathway is lipid metabolism. Its function is as follows. Cis-prenyl transferase involved in the synthesis of dolichol, a long-chain polyprenol that is utilized as a sugar carrier in protein glycosylation in the endoplasmic reticulum (ER). Catalyzes the sequential condensation of isopentenyl pyrophosphate (IPP) with farnesyl pyrophosphate (FPP) to produce a polyprenyl pyrophosphate which contains 11 (major) and 12 (minor) isoprene units. This Giardia intestinalis (strain ATCC 50803 / WB clone C6) (Giardia lamblia) protein is Di-trans,poly-cis-undecaprenyl-diphosphate synthase.